Consider the following 91-residue polypeptide: Acylphosphatase (91 aa).

The Acylphosphatase-like domain occupies 5–91 (CSKFIVSGHV…EHDYQGFEIL (87 aa)). Catalysis depends on residues Arg20 and Asn38.

The protein belongs to the acylphosphatase family.

It carries out the reaction an acyl phosphate + H2O = a carboxylate + phosphate + H(+). The protein is Acylphosphatase (acyP) of Vibrio cholerae serotype O1 (strain ATCC 39315 / El Tor Inaba N16961).